We begin with the raw amino-acid sequence, 240 residues long: Large ribosomal subunit protein bL25 (240 aa).

Residues 1 to 23 form a disordered region; that stretch reads MATVKELKATARPKAGKGAARAE. Over residues 10-19 the composition is skewed to low complexity; it reads TARPKAGKGA.

It belongs to the bacterial ribosomal protein bL25 family. CTC subfamily. Part of the 50S ribosomal subunit; part of the 5S rRNA/L5/L18/L25 subcomplex. Contacts the 5S rRNA. Binds to the 5S rRNA independently of L5 and L18.

Functionally, this is one of the proteins that binds to the 5S RNA in the ribosome where it forms part of the central protuberance. This chain is Large ribosomal subunit protein bL25, found in Afipia carboxidovorans (strain ATCC 49405 / DSM 1227 / KCTC 32145 / OM5) (Oligotropha carboxidovorans).